We begin with the raw amino-acid sequence, 130 residues long: Fumarate reductase subunit C (130 aa).

3 helical membrane passes run 34 to 54 (VPAV…KGGV), 60 to 80 (FVGF…LLAA), and 109 to 129 (IVKT…AVAL).

Belongs to the FrdC family. As to quaternary structure, part of an enzyme complex containing four subunits: a flavoprotein (FrdA), an iron-sulfur protein (FrdB), and two hydrophobic anchor proteins (FrdC and FrdD).

It localises to the cell inner membrane. In terms of biological role, two distinct, membrane-bound, FAD-containing enzymes are responsible for the catalysis of fumarate and succinate interconversion; fumarate reductase is used in anaerobic growth, and succinate dehydrogenase is used in aerobic growth. Anchors the catalytic components of the fumarate reductase complex to the cell inner membrane, binds quinones. This Serratia proteamaculans (strain 568) protein is Fumarate reductase subunit C.